A 290-amino-acid polypeptide reads, in one-letter code: Phosphatidylglycerol--prolipoprotein diacylglyceryl transferase (290 aa).

7 helical membrane passes run 21–41 (VALHWYGLMYLVGFIFAMWLA), 60–80 (LLYAGFLGVFLGGRIGYVLFY), 96–116 (WDGGMSFHGGLIGVILVMVIF), 124–144 (FFQVADFMAPLIPFGLGAGRL), 198–218 (SQLYELALEGVVLFIILNLFI), 225–245 (GSVSGLFLIGYGAFRIIVEFF), and 260–280 (ISMGQILSIPMIVAGIIMMIW). R143 contacts a 1,2-diacyl-sn-glycero-3-phospho-(1'-sn-glycerol).

Belongs to the Lgt family.

Its subcellular location is the cell inner membrane. The catalysed reaction is L-cysteinyl-[prolipoprotein] + a 1,2-diacyl-sn-glycero-3-phospho-(1'-sn-glycerol) = an S-1,2-diacyl-sn-glyceryl-L-cysteinyl-[prolipoprotein] + sn-glycerol 1-phosphate + H(+). The protein operates within protein modification; lipoprotein biosynthesis (diacylglyceryl transfer). In terms of biological role, catalyzes the transfer of the diacylglyceryl group from phosphatidylglycerol to the sulfhydryl group of the N-terminal cysteine of a prolipoprotein, the first step in the formation of mature lipoproteins. This Enterobacter sp. (strain 638) protein is Phosphatidylglycerol--prolipoprotein diacylglyceryl transferase.